Here is a 337-residue protein sequence, read N- to C-terminus: Vacuolar protein sorting-associated protein 26B-B (337 aa).

A disordered region spans residues 313-337 (RFEGTSHPETRPQHSGAAALEQEHE).

Belongs to the VPS26 family. Component of the heterotrimeric retromer cargo-selective complex (CSC) which is believed to associate with variable sorting nexins to form functionally distinct retromer complex variants.

It is found in the cytoplasm. The protein resides in the membrane. It localises to the endosome. Its function is as follows. Acts as a component of the retromer cargo-selective complex (CSC). The CSC is believed to be the core functional component of retromer or respective retromer complex variants acting to prevent missorting of selected transmembrane cargo proteins into the lysosomal degradation pathway. Retromer mediates retrograde transport of cargo proteins from endosomes to the trans-Golgi network (TGN). This chain is Vacuolar protein sorting-associated protein 26B-B (vps26b-b), found in Xenopus laevis (African clawed frog).